A 755-amino-acid polypeptide reads, in one-letter code: Glucosylglycerol-phosphate synthase (755 aa).

It belongs to the glycosyltransferase 20 family.

It catalyses the reaction ADP-alpha-D-glucose + sn-glycerol 3-phosphate = 2-O-(alpha-D-glucopyranosyl)-sn-glycerol 3-phosphate + ADP + H(+). It participates in glycan metabolism; glucosylglycerol biosynthesis. Functionally, involved in salt tolerance by producing GG-phosphate from ADP-glucose and glycerol-3-phosphate (G3P), an intermediate in the synthesis of the osmolyte glucosylglycerol (GG). The sequence is that of Glucosylglycerol-phosphate synthase (ggpS) from Pseudomonas anguilliseptica.